The primary structure comprises 474 residues: 3-isopropylmalate dehydratase large subunit (474 aa).

Positions 355, 415, and 418 each coordinate [4Fe-4S] cluster.

The protein belongs to the aconitase/IPM isomerase family. LeuC type 1 subfamily. In terms of assembly, heterodimer of LeuC and LeuD. [4Fe-4S] cluster serves as cofactor.

It catalyses the reaction (2R,3S)-3-isopropylmalate = (2S)-2-isopropylmalate. Its pathway is amino-acid biosynthesis; L-leucine biosynthesis; L-leucine from 3-methyl-2-oxobutanoate: step 2/4. Catalyzes the isomerization between 2-isopropylmalate and 3-isopropylmalate, via the formation of 2-isopropylmaleate. This Shewanella sp. (strain MR-7) protein is 3-isopropylmalate dehydratase large subunit.